Here is a 318-residue protein sequence, read N- to C-terminus: Ribosomal RNA small subunit methyltransferase A (318 aa).

Residues Asn40, Val42, Gly67, Glu88, Asp118, and Asn137 each contribute to the S-adenosyl-L-methionine site. Residues 295–305 show a composition bias toward basic and acidic residues; the sequence is SADRGGTDREG. The disordered stretch occupies residues 295-318; the sequence is SADRGGTDREGTSPPTAGQGAPAR.

It belongs to the class I-like SAM-binding methyltransferase superfamily. rRNA adenine N(6)-methyltransferase family. RsmA subfamily.

The protein resides in the cytoplasm. It catalyses the reaction adenosine(1518)/adenosine(1519) in 16S rRNA + 4 S-adenosyl-L-methionine = N(6)-dimethyladenosine(1518)/N(6)-dimethyladenosine(1519) in 16S rRNA + 4 S-adenosyl-L-homocysteine + 4 H(+). Functionally, specifically dimethylates two adjacent adenosines (A1518 and A1519) in the loop of a conserved hairpin near the 3'-end of 16S rRNA in the 30S particle. May play a critical role in biogenesis of 30S subunits. This Mycolicibacterium paratuberculosis (strain ATCC BAA-968 / K-10) (Mycobacterium paratuberculosis) protein is Ribosomal RNA small subunit methyltransferase A.